The primary structure comprises 346 residues: Porin Omp2a (346 aa).

Residues 1–22 (MNIKSLLLGSAAALVAASGAQA) form the signal peptide.

This sequence belongs to the alphaproteobacteria porin family. Monomer.

Its subcellular location is the cell outer membrane. Its function is as follows. Forms passive diffusion pores that allow small molecular weight hydrophilic materials across the outer membrane. This chain is Porin Omp2a (omp2a), found in Brucella ovis.